A 395-amino-acid chain; its full sequence is Cation channel sperm-associated protein 3 (395 aa).

The Cytoplasmic portion of the chain corresponds to 1–48; it reads MSQHFHHNPVRVKSGSLFATASEALQARLSKIKRKDKECQAYFRKVIK. The chain crosses the membrane as a helical span at residues 49–71; it reads STFFQIVMITTVTTNSFLLVLGT. The Extracellular portion of the chain corresponds to 72 to 80; the sequence is NYDIQFEFF. Residues 81-107 traverse the membrane as a helical segment; sequence RTFEVSELFFVSVYVCEFLMKVYVDPI. A topological domain (cytoplasmic) is located at residue T108. A helical transmembrane segment spans residues 109–131; sequence YWKDGYNILDVIILIILTIPYLL. Residues 132-143 are Extracellular-facing; it reads RKIKGNHSAYLH. Residues 144-160 form a helical membrane-spanning segment; sequence FADGIQSLRILKLISYS. The Cytoplasmic segment spans residues 161–168; it reads RGIRTLII. Residues 169-195 traverse the membrane as a helical segment; it reads AVGETVYTVASVLTLLFLLMFVFAILG. At 196 to 216 the chain is on the extracellular side; it reads FCLFGVTDRGDLENWGNLASA. Positions 217 to 236 form an intramembrane region, helical; Pore-forming; sequence FFTLFSLATVDGWTDLQEEL. Residues 237 to 242 are Extracellular-facing; sequence DKRKFT. A helical membrane pass occupies residues 243 to 268; that stretch reads VSRAFTILFILLASFIFLNMFVGVMI. Over 269–395 the chain is Cytoplasmic; the sequence is MHTEDSMKKF…ESSSSLSGLS (127 aa).

This sequence belongs to the cation channel sperm-associated (TC 1.A.1.19) family. As to quaternary structure, component of the CatSper complex or CatSpermasome composed of the core pore-forming members CATSPER1, CATSPER2, CATSPER3 and CATSPER4 as well as auxiliary members CATSPERB, CATSPERG2, CATSPERD, CATSPERE, CATSPERZ, C2CD6/CATSPERT, SLCO6C1, TMEM249, TMEM262 and EFCAB9. HSPA1 may be an additional auxiliary complex member. The core complex members CATSPER1, CATSPER2, CATSPER3 and CATSPER4 form a heterotetrameric channel. The auxiliary CATSPERB, CATSPERG2, CATSPERD and CATSPERE subunits form a pavilion-like structure over the pore which stabilizes the complex through interactions with CATSPER4, CATSPER3, CATSPER1 and CATSPER2 respectively. SLCO6C1 interacts with CATSPERE and TMEM262/CATSPERH interacts with CATSPERB, further stabilizing the complex. C2CD6/CATSPERT interacts at least with CATSPERD and is required for targeting the CatSper complex in the flagellar membrane. Testis-specific.

It localises to the cell projection. The protein resides in the cilium. The protein localises to the flagellum membrane. The catalysed reaction is Ca(2+)(in) = Ca(2+)(out). Its activity is regulated as follows. In contrast to the human ortholog, not activated by progesterone. Activated by intracellular alkalinization. Its function is as follows. Pore-forming subunit of the CatSper complex, a sperm-specific voltage-gated calcium channel that plays a central role in sperm cell hyperactivation. Controls calcium entry to mediate the hyperactivated motility, a step needed for sperm motility which is essential late in the preparation of sperm for fertilization. This chain is Cation channel sperm-associated protein 3 (Catsper3), found in Mus musculus (Mouse).